We begin with the raw amino-acid sequence, 91 residues long: Late embryogenesis abundant protein EMB564 (91 aa).

Composition is skewed to basic and acidic residues over residues 1–19 (MASGQESRKELDRKAREGE) and 32–51 (EAQEHLAEGRSRGGQTRREQ). The tract at residues 1–91 (MASGQESRKE…VTIDESKFTK (91 aa)) is disordered.

It belongs to the small hydrophilic plant seed protein family.

Its function is as follows. LEA proteins are late embryonic proteins abundant in higher plant seed embryos. They may play an essential role in seed survival and in controlling water exchanges during seed desiccation and imbibition. In Zea mays (Maize), this protein is Late embryogenesis abundant protein EMB564.